The following is a 108-amino-acid chain: Large ribosomal subunit protein P2A (108 aa).

The tract at residues L62–D108 is disordered. Residues G68–E84 show a composition bias toward low complexity. The span at A85 to M102 shows a compositional bias: acidic residues. Position 98 is a phosphoserine (S98).

Belongs to the eukaryotic ribosomal protein P1/P2 family.

In terms of biological role, plays an important role in the elongation step of protein synthesis. The polypeptide is Large ribosomal subunit protein P2A (RPP2A) (Candida albicans (Yeast)).